The chain runs to 134 residues: Small ribosomal subunit protein uS8c (134 aa).

It belongs to the universal ribosomal protein uS8 family. Part of the 30S ribosomal subunit.

The protein resides in the plastid. It is found in the chloroplast. In terms of biological role, one of the primary rRNA binding proteins, it binds directly to 16S rRNA central domain where it helps coordinate assembly of the platform of the 30S subunit. The protein is Small ribosomal subunit protein uS8c (rps8) of Ipomoea purpurea (Common morning glory).